The sequence spans 182 residues: uncharacterized protein (182 aa).

It is found in the plastid. The protein resides in the cyanelle. This is an uncharacterized protein from Cyanophora paradoxa.